Reading from the N-terminus, the 213-residue chain is Protein DMP4 (213 aa).

Transmembrane regions (helical) follow at residues 51-71 (LANLLPTGTVLAFQLLSPIFS), 78-98 (LVSKIMTSTLVAICGFSCFIL), 142-162 (FIDFVHAFMSLFVFGAVVLFD), and 180-200 (VLTALPVGVGVFSSMLFATFP).

It belongs to the plant DMP1 protein family. In terms of tissue distribution, expressed in leaves, flowers and siliques, especially in vascular tissues.

The protein localises to the vacuole membrane. Its function is as follows. Involved in membrane remodeling. The polypeptide is Protein DMP4 (Arabidopsis thaliana (Mouse-ear cress)).